A 170-amino-acid polypeptide reads, in one-letter code: Adenine phosphoribosyltransferase (170 aa).

Belongs to the purine/pyrimidine phosphoribosyltransferase family. As to quaternary structure, homodimer.

Its subcellular location is the cytoplasm. The enzyme catalyses AMP + diphosphate = 5-phospho-alpha-D-ribose 1-diphosphate + adenine. Its pathway is purine metabolism; AMP biosynthesis via salvage pathway; AMP from adenine: step 1/1. Catalyzes a salvage reaction resulting in the formation of AMP, that is energically less costly than de novo synthesis. The chain is Adenine phosphoribosyltransferase from Mycoplasma capricolum subsp. capricolum (strain California kid / ATCC 27343 / NCTC 10154).